Here is a 90-residue protein sequence, read N- to C-terminus: Small ribosomal subunit protein uS15c (90 aa).

The protein belongs to the universal ribosomal protein uS15 family. As to quaternary structure, part of the 30S ribosomal subunit.

The protein localises to the plastid. It is found in the chloroplast. This is Small ribosomal subunit protein uS15c (rps15-A) from Lolium perenne (Perennial ryegrass).